We begin with the raw amino-acid sequence, 1534 residues long: Slit homolog 1 protein (1534 aa).

Positions 1–33 are cleaved as a signal peptide; sequence MALTPGWGSSAGPVRPELWLLLWAAAWRLGASA. The region spanning 34–61 is the LRRNT domain; the sequence is CPALCTCTGTTVDCHGTGLQAIPKNIPR. LRR repeat units follow at residues 62–83, 86–107, 110–131, 134–155, 158–179, and 182–203; these read NTER…DFAG, QLRV…AFDD, ELER…LFQN, ALSR…AFRG, DLKN…AFRA, and GLEV…SFNH. Residue Asn72 is glycosylated (N-linked (GlcNAc...) asparagine). N-linked (GlcNAc...) asparagine glycosylation occurs at Asn192. The LRRCT 1 domain maps to 215–265; the sequence is NHLFCDCHLAWLSQWLRQRPTIGLFTQCSGPASLRGLNVAEVQKSEFSCSG. The region spanning 273–309 is the LRRNT 2 domain; it reads PTCTLSSGSCPAMCTCSNGIVDCRGKGLTAIPANLPE. The cysteines at positions 286 and 295 are disulfide-linked. LRR repeat units follow at residues 310 to 331, 334 to 355, 358 to 379, 382 to 403, and 406 to 427; these read TMTE…AFSP, KLRR…AFQG, SLNS…VFGG, TLQL…AFQD, and NLSL…TFTS. Residue Asn406 is glycosylated (N-linked (GlcNAc...) asparagine). Residues 439 to 489 form the LRRCT 2 domain; the sequence is NPFICDCNLKWLADFLRTNPIETSGARCASPRRLANKRIGQIKSKKFRCSA. 4 disulfide bridges follow: Cys443-Cys466, Cys445-Cys487, Cys513-Cys519, and Cys517-Cys526. The LRRNT 3 domain maps to 504-540; the sequence is NSECNSDVVCPHKCRCEANVVECSSLKLTKIPERIPQ. LRR repeat units lie at residues 541 to 562, 566 to 587, 590 to 611, 614 to 635, and 638 to 659; these read STAE…GMFK, HLKK…AFEG, SVSE…MFRG, GLRT…SFTG, and NVRL…AFDT. N-linked (GlcNAc...) asparagine glycosylation occurs at Asn571. Asn630 is a glycosylation site (N-linked (GlcNAc...) asparagine). The 51-residue stretch at 671-721 folds into the LRRCT 3 domain; the sequence is NPFNCNCQLAWLGGWLRKRKIVTGNPRCQNPDFLRQIPLQDVAFPDFRCEE. 2 disulfide bridges follow: Cys675/Cys698 and Cys677/Cys719. One can recognise an LRRNT 4 domain in the interval 725–761; sequence EGGCLPRPQCPQECACLDTVVRCSNKHLRALPKGIPK. N-linked (GlcNAc...) asparagine glycans are attached at residues Asn762, Asn801, and Asn806. LRR repeat units follow at residues 762–783, 785–806, 809–830, and 833–854; these read NVTE…LSTF, YLQL…SFTN, QLTT…AFQG, and SLRL…IFAD. In terms of domain architecture, LRRCT 4 spans 866-916; the sequence is NPLYCDCHLRWLSSWVKTGYKEPGIARCAGPQDMEGKLLLTTPAKKFECQG. EGF-like domains follow at residues 927-962, 964-1003, 1005-1041, 1043-1081, 1083-1119, and 1127-1163; these read DLCL…RDCE, SLDS…PTCG, NTDD…KACE, LVDL…DNCS, NQDD…QLCE, and PKSP…PECE. 18 cysteine pairs are disulfide-bonded: Cys929–Cys940, Cys934–Cys950, Cys952–Cys961, Cys968–Cys979, Cys973–Cys991, Cys993–Cys1002, Cys1009–Cys1020, Cys1014–Cys1029, Cys1031–Cys1040, Cys1047–Cys1060, Cys1054–Cys1069, Cys1071–Cys1080, Cys1087–Cys1098, Cys1092–Cys1107, Cys1109–Cys1118, Cys1131–Cys1142, Cys1136–Cys1151, and Cys1153–Cys1162. The N-linked (GlcNAc...) asparagine glycan is linked to Asn1026. Asn1079 is a glycosylation site (N-linked (GlcNAc...) asparagine). Residues 1166-1339 form the Laminin G-like domain; sequence LSVNFVDRDT…QMKPGVVPGC (174 aa). N-linked (GlcNAc...) asparagine glycosylation is found at Asn1189, Asn1259, and Asn1306. 14 disulfide bridges follow: Cys1313–Cys1339, Cys1342–Cys1352, Cys1347–Cys1362, Cys1364–Cys1373, Cys1381–Cys1391, Cys1386–Cys1401, Cys1403–Cys1412, Cys1422–Cys1432, Cys1427–Cys1442, Cys1444–Cys1453, Cys1459–Cys1498, Cys1477–Cys1512, Cys1488–Cys1528, and Cys1492–Cys1530. 3 EGF-like domains span residues 1340–1374, 1377–1413, and 1418–1454; these read EPCR…LHCD, ADGP…ALCN, and LAEP…ELCE. Residues 1459 to 1534 enclose the CTCK domain; it reads CRGDPVRDFH…PTKCGCALCA (76 aa).

Interacts with ROBO1 and GREM1. As to expression, predominantly expressed in adult forebrain. Expressed in fetal brain, lung and kidney.

The protein resides in the secreted. Functionally, thought to act as molecular guidance cue in cellular migration, and function appears to be mediated by interaction with roundabout homolog receptors. During neural development involved in axonal navigation at the ventral midline of the neural tube and projection of axons to different regions. SLIT1 and SLIT2 together seem to be essential for midline guidance in the forebrain by acting as repulsive signal preventing inappropriate midline crossing by axons projecting from the olfactory bulb. In Homo sapiens (Human), this protein is Slit homolog 1 protein (SLIT1).